Reading from the N-terminus, the 619-residue chain is MKSLLDSLNFPKDLNNLNDSDTERLSKEIRQFLIESVSKTGGHLSSNLGVVELTLSLMKSFDFEKDKIVWDVGHQSYVYKILTGRKDGFKNLRQFDGLSGFPKRNESKYDYFDTGHSSTSISAGLGMARARDLKKEKYTVVSVIGDGALTGGMALEALNDVGFRKTKMVIILNDNQMSISLNVGGLSRYLNKLRMGETYNRLKTNINTSLGSSDLGKDIISKMSKVKDSIKQLVVPSMFFENMGVKYIGPIDGHDIKAMNEVFSKVKDVEGPVIIHTVTQKGRGYSLAEKSPSKYHAVPPRANEKEKPSKPCKDTYSKAFGNALINIAKEEKEVVAITAAMPDGTGLKEFSTIYPERFFDVGIAEQHAVTLAAGMAANGLKPVFAVYSTFLQRGFDQVIHDVCIQDLPVTFAIDRAGIVGDDGETHQGIMDVSYLSMMPNMTIVAPKCTEEIPSMLRWAIKKNSPVAIRYPRGKDIVCNLHALQEISYGKWEVVSEGKRICIIASGRMLQHAFLAKEILKENGIDPKIVNATFIKPIDKCLLENLKEDGYDILTIEDNIICGGLGMAVLEHLNCIDYKGNMKLLGYDDEFIPQGNVEILYKTYGLDPVSISNTILKLYN.

Thiamine diphosphate-binding positions include His74 and Gly115–Ser117. A Mg(2+)-binding site is contributed by Asp146. Thiamine diphosphate is bound by residues Gly147–Ala148, Asn175, and Tyr285. Asn175 provides a ligand contact to Mg(2+). Positions Glu289–Cys312 are disordered. A compositionally biased stretch (basic and acidic residues) spans Ala302–Cys312. A thiamine diphosphate-binding site is contributed by Glu365.

It belongs to the transketolase family. DXPS subfamily. As to quaternary structure, homodimer. It depends on Mg(2+) as a cofactor. Thiamine diphosphate is required as a cofactor.

The enzyme catalyses D-glyceraldehyde 3-phosphate + pyruvate + H(+) = 1-deoxy-D-xylulose 5-phosphate + CO2. The protein operates within metabolic intermediate biosynthesis; 1-deoxy-D-xylulose 5-phosphate biosynthesis; 1-deoxy-D-xylulose 5-phosphate from D-glyceraldehyde 3-phosphate and pyruvate: step 1/1. In terms of biological role, catalyzes the acyloin condensation reaction between C atoms 2 and 3 of pyruvate and glyceraldehyde 3-phosphate to yield 1-deoxy-D-xylulose-5-phosphate (DXP). In Clostridium botulinum (strain Eklund 17B / Type B), this protein is 1-deoxy-D-xylulose-5-phosphate synthase.